Consider the following 344-residue polypeptide: [LysW]-L-2-aminoadipate 6-phosphate reductase (344 aa).

NADP(+) is bound by residues 12–15 (SGYA), 36–38 (SRR), and Leu75. Cys148 is a catalytic residue. NADP(+)-binding residues include Ser180, Ala184, and Asn312.

Belongs to the NAGSA dehydrogenase family. Type 1 subfamily. LysY sub-subfamily. In terms of assembly, homotetramer. Interacts with LysW. May form a ternary complex with LysW and LysZ.

The protein resides in the cytoplasm. It catalyses the reaction [amino-group carrier protein]-C-terminal-N-(1-carboxy-5-oxopentan-1-yl)-L-glutamine + phosphate + NADP(+) = [amino-group carrier protein]-C-terminal-N-(1-carboxy-5-phosphooxy-5-oxopentan-1-yl)-L-glutamine + NADPH + H(+). Its pathway is amino-acid biosynthesis; L-lysine biosynthesis via AAA pathway; L-lysine from L-alpha-aminoadipate (Thermus route): step 3/5. Functionally, catalyzes the NADPH-dependent reduction of [LysW]-aminoadipate 6-phosphate to yield [LysW]-aminoadipate 6-semialdehyde. This chain is [LysW]-L-2-aminoadipate 6-phosphate reductase, found in Thermus thermophilus (strain ATCC BAA-163 / DSM 7039 / HB27).